A 349-amino-acid chain; its full sequence is Holliday junction branch migration complex subunit RuvB (349 aa).

The tract at residues 1 to 183 (MTDPSRLVTP…FGIPIRLNFY (183 aa)) is large ATPase domain (RuvB-L). ATP is bound by residues L22, R23, G64, K67, T68, T69, 130–132 (EDF), R173, Y183, and R220. Residue T68 participates in Mg(2+) binding. The segment at 184 to 254 (TIEELESIVT…IADHALGALE (71 aa)) is small ATPAse domain (RuvB-S). Positions 257–349 (SAGLDAMDRR…GLFGDTGDQE (93 aa)) are head domain (RuvB-H). 3 residues coordinate DNA: R293, R312, and R317.

It belongs to the RuvB family. In terms of assembly, homohexamer. Forms an RuvA(8)-RuvB(12)-Holliday junction (HJ) complex. HJ DNA is sandwiched between 2 RuvA tetramers; dsDNA enters through RuvA and exits via RuvB. An RuvB hexamer assembles on each DNA strand where it exits the tetramer. Each RuvB hexamer is contacted by two RuvA subunits (via domain III) on 2 adjacent RuvB subunits; this complex drives branch migration. In the full resolvosome a probable DNA-RuvA(4)-RuvB(12)-RuvC(2) complex forms which resolves the HJ.

Its subcellular location is the cytoplasm. The enzyme catalyses ATP + H2O = ADP + phosphate + H(+). Functionally, the RuvA-RuvB-RuvC complex processes Holliday junction (HJ) DNA during genetic recombination and DNA repair, while the RuvA-RuvB complex plays an important role in the rescue of blocked DNA replication forks via replication fork reversal (RFR). RuvA specifically binds to HJ cruciform DNA, conferring on it an open structure. The RuvB hexamer acts as an ATP-dependent pump, pulling dsDNA into and through the RuvAB complex. RuvB forms 2 homohexamers on either side of HJ DNA bound by 1 or 2 RuvA tetramers; 4 subunits per hexamer contact DNA at a time. Coordinated motions by a converter formed by DNA-disengaged RuvB subunits stimulates ATP hydrolysis and nucleotide exchange. Immobilization of the converter enables RuvB to convert the ATP-contained energy into a lever motion, pulling 2 nucleotides of DNA out of the RuvA tetramer per ATP hydrolyzed, thus driving DNA branch migration. The RuvB motors rotate together with the DNA substrate, which together with the progressing nucleotide cycle form the mechanistic basis for DNA recombination by continuous HJ branch migration. Branch migration allows RuvC to scan DNA until it finds its consensus sequence, where it cleaves and resolves cruciform DNA. The sequence is that of Holliday junction branch migration complex subunit RuvB from Rhodopseudomonas palustris (strain TIE-1).